The primary structure comprises 200 residues: Phospholipase A2 inhibitor gamma subunit B (200 aa).

The first 19 residues, 1–19 (MKFLLFCCLFGTFLATGMC), serve as a signal peptide directing secretion. 8 disulfide bridges follow: C22–C46, C25–C32, C39–C67, C73–C94, C95–C100, C120–C145, C138–C165, and C171–C191.

The protein belongs to the CNF-like-inhibitor family. As to quaternary structure, heteromer composed of subunit A and subunit B.

The protein localises to the secreted. Inhibits the enzymatic activity of the phospholipase A2 (PLA2). The chain is Phospholipase A2 inhibitor gamma subunit B from Elaphe climacophora (Japanese rat snake).